A 337-amino-acid chain; its full sequence is Perakine reductase (337 aa).

Y57 serves as the catalytic Proton donor. Residue H126 coordinates substrate. 205-214 (SPIGRGLFAG) contacts NADP(+).

The protein belongs to the aldo/keto reductase family.

The enzyme catalyses raucaffrinoline + NADP(+) = perakine + NADPH + H(+). Functionally, aldo-keto reductase involved in the biosynthesis of monoterpenoid indole alkaloids. Broad substrate specificity enzyme with a high selectivity in the group of alkaloids. Can use perakine, 19(S),20(R)-dihydro-peraksine-17,21-al, cinnamic aldehyde, p-coumaric aldehyde and 3-(3,4,5-trimethoxyphenyl)propanal as substrates, but not ketosteroids such as progesterone. NADPH could not be replaced by NADH. The polypeptide is Perakine reductase (PR) (Rauvolfia serpentina (Serpentine wood)).